Consider the following 356-residue polypeptide: Septin-2A (356 aa).

The Septin-type G domain occupies 33-305 (KGFEFTLMVV…ENFRSERLKK (273 aa)). The interval 43–50 (GESGLGKS) is G1 motif. GTP-binding positions include 43–50 (GESGLGKS), threonine 77, glycine 103, 182–190 (KADTLTLRE), glycine 240, and arginine 255. The G3 motif stretch occupies residues 100 to 103 (DTPG). The segment at 181 to 184 (AKAD) is G4 motif. The tract at residues 259-269 (WGVVEVENTEH) is important for dimerization.

The protein belongs to the TRAFAC class TrmE-Era-EngA-EngB-Septin-like GTPase superfamily. Septin GTPase family. As to quaternary structure, septins polymerize into heterooligomeric protein complexes that form filaments, and associate with cellular membranes, actin filaments and microtubules. GTPase activity is required for filament formation. Can form heterooligomers with other family members and form filaments. Interacts with wdpcp.

The protein localises to the cytoplasm. It localises to the cytoskeleton. Its subcellular location is the spindle. The protein resides in the cleavage furrow. It is found in the midbody. The protein localises to the cell projection. It localises to the cilium membrane. Filament-forming cytoskeletal GTPase. Required for normal organization of the actin cytoskeleton. Plays a role in the biogenesis of polarized columnar-shaped epithelium. Required for the progression through mitosis through regulation of chromosome congression. During anaphase, may be required for chromosome segregation and spindle elongation. Probably plays a role in ciliogenesis and collective cell movements including convergent extension during gastrulation. In cilia, required for the integrity of the diffusion barrier at the base of the primary cilium that prevents diffusion of transmembrane proteins between the cilia and plasma membranes. Controls cell shape and not polarization of cells during convergent extension. This Xenopus laevis (African clawed frog) protein is Septin-2A (sept2-a).